Reading from the N-terminus, the 527-residue chain is Gustatory receptor for bitter taste 66a (527 aa).

Residues M1 to N46 lie on the Cytoplasmic side of the membrane. The chain crosses the membrane as a helical span at residues G47 to Y67. Topologically, residues S68 to Q80 are extracellular. Residues S81–S101 traverse the membrane as a helical segment. Residues D102–R144 are Cytoplasmic-facing. A helical transmembrane segment spans residues I145–L165. The Extracellular segment spans residues V166–L174. Residues L175–V195 traverse the membrane as a helical segment. The Cytoplasmic portion of the chain corresponds to S196–P345. The chain crosses the membrane as a helical span at residues I346–C366. Topologically, residues A367 to N382 are extracellular. A helical transmembrane segment spans residues P383–L403. The Cytoplasmic portion of the chain corresponds to S404 to T460. A helical membrane pass occupies residues L461–A481. Over A482–V527 the chain is Extracellular. N-linked (GlcNAc...) asparagine glycosylation is found at N496 and N510.

This sequence belongs to the insect chemoreceptor superfamily. Gustatory receptor (GR) family. Gr66a subfamily. As to expression, taste hairs in labial palps, labral and cibarial sense organs and forelegs. In larvae, is expressed in neurons of the terminal external chemosensory organ, as well as in the dorsal, ventral, and posterior pharyngeal sense organs.

It is found in the cell membrane. Functionally, gustatory receptor required for response to the bitter in taste neurons. Gr66a cells respond to bitter compounds such as caffeine, theophylline, threonine or valine. Flies avoid bitter substances, suggesting that Gr66a neuron activity is sufficient to mediate avoidance behavior. Required for sensing and avoiding N,N-Diethyl-meta-toluamide (DEET), the most widely used insect repellent worldwide, as well as to L-canavanine, a plant-derived insecticide. Gr66a neurons are also involved in the sex-specific perception of molecules inducing male avoidance behavior, probably through sensing 7-tricosene (7-T), a male cuticular pheromone and leading to inhibition of male-male courtship. Finally, also plays a role in oviposition behavior, in which females evaluate their environment and choose to lay eggs on substrates they may find aversive in other contexts. The chain is Gustatory receptor for bitter taste 66a (Gr66a) from Drosophila melanogaster (Fruit fly).